Here is a 256-residue protein sequence, read N- to C-terminus: Small ribosomal subunit protein eS1 (256 aa).

The span at 1 to 18 (MAVGKNKRLSKGKKGVKK) shows a compositional bias: basic residues. The disordered stretch occupies residues 1-21 (MAVGKNKRLSKGKKGVKKRTV). At A2 the chain carries N-acetylalanine; partial.

The protein belongs to the eukaryotic ribosomal protein eS1 family. Component of the small ribosomal subunit. Mature ribosomes consist of a small (40S) and a large (60S) subunit. The 40S subunit contains about 33 different proteins and 1 molecule of RNA (18S). The 60S subunit contains about 49 different proteins and 3 molecules of RNA (25S, 5.8S and 5S).

Its subcellular location is the cytoplasm. The chain is Small ribosomal subunit protein eS1 (rps1) from Neosartorya fischeri (strain ATCC 1020 / DSM 3700 / CBS 544.65 / FGSC A1164 / JCM 1740 / NRRL 181 / WB 181) (Aspergillus fischerianus).